The sequence spans 580 residues: Type 3 secretion system translocon protein SctE (580 aa).

IpgC chaperone binding domain stretches follow at residues 15–45 (KILT…IADL) and 51–72 (INTT…APKS). Residues 61-70 (NILIPELKAP) are mediates interaction with human MAD2L2. Residues 104-224 (AWKSQQQARQ…MQLEKEIDSF (121 aa)) adopt a coiled-coil conformation. A run of 2 helical transmembrane segments spans residues 313 to 333 (ILGA…GGAS) and 399 to 419 (IGSI…VVLV).

It belongs to the SctE/SipB/YopB family. In terms of assembly, the core secretion machinery of the T3SS is composed of approximately 20 different proteins, including cytoplasmic components, a base, an export apparatus and a needle. This subunit is involved in the formation of a pore, called the translocon, in host membrane. Interacts with IpaC/SctB. Interacts with the needle tip protein IpaD/SctA. Interacts with the molecular chaperone IpgC, which prevents premature association with IpaC/SctB within the cytoplasm of Shigella cells and protects IpaB/SctE from proteolysis. Interacts with the host protein ICE in the cytoplasm of infected macrophages. Interacts with human MAD2L2 in the G2/M phase of the cell cycle.

It is found in the secreted. The protein localises to the host membrane. Its subcellular location is the host cell. It localises to the host nucleus. Interaction with the membrane is affected by the pH. IpaB/SctE is more efficient in destabilizing the membrane at pH 5.0 than at neutral pH. Functionally, component of the type III secretion system (T3SS), also called injectisome, which is used to inject bacterial effector proteins into eukaryotic host cells. IpaB/SctE and IpaC/SctB are inserted into the host membrane where they form a pore and allow the translocation of effector proteins into the cytosol of target cells. Interaction with IpaD/SctA at needle tips leads to the formation of the MxiH/SctF-IpaD/SctA-IpaB/SctE ternary complex, which is essential for host cell sensing. Interaction of IpaB/SctE with host membrane lipids promotes recruitment of IpaC/SctB at the needle tip concomitant with translocon insertion into the host membrane and type III secretion induction. In terms of biological role, required for efficient dissemination. Necessary for lysis of the two cellular membranes that surround bacteria in protrusions during cell-to-cell spread. Is sufficient to induce macrophage apoptosis through activation of the interleukin-1 beta converting enzyme (ICE) in infected macrophages. In epithelial cells, causes cell-cycle arrest by targeting host MAD2L2, an anaphase-promoting complex/cyclosome (APC) inhibitor. The protein is Type 3 secretion system translocon protein SctE of Shigella flexneri.